We begin with the raw amino-acid sequence, 131 residues long: Plastocyanin (131 aa).

A signal peptide spans 1-34 (MKFFASLSKRFAPVLSLVVLVAGTLLLSAAPASA). Positions 35–131 (ATVQIKMGTD…AGMVGTITVE (97 aa)) constitute a Plastocyanin-like domain. Positions 73, 116, 119, and 124 each coordinate Cu cation.

This sequence belongs to the plastocyanin family. The cofactor is Cu(2+).

It localises to the cellular thylakoid membrane. In terms of biological role, participates in electron transfer between P700 and the cytochrome b6-f complex in photosystem I. This chain is Plastocyanin (petE), found in Prochlorothrix hollandica.